An 831-amino-acid chain; its full sequence is Glycerol-3-phosphate acyltransferase (831 aa).

An HXXXXD motif motif is present at residues 304 to 309; that stretch reads CHRSHM. The tract at residues 801–831 is disordered; that stretch reads VSMPAETSNQPEAPETPETPETPEPEGKTES.

This sequence belongs to the GPAT/DAPAT family.

The protein resides in the cell inner membrane. It carries out the reaction sn-glycerol 3-phosphate + an acyl-CoA = a 1-acyl-sn-glycero-3-phosphate + CoA. It functions in the pathway phospholipid metabolism; CDP-diacylglycerol biosynthesis; CDP-diacylglycerol from sn-glycerol 3-phosphate: step 1/3. The polypeptide is Glycerol-3-phosphate acyltransferase (Yersinia pseudotuberculosis serotype IB (strain PB1/+)).